A 156-amino-acid chain; its full sequence is MKLPLSPSTEPVATEPLGMALLSSILAAWSYISENPERAALYFVSGVCIGLFLTLAALVMRISCHTDCRRGPRRRCLQDRECSDSSDSEDGSEDTASDLSVRRHRRFERTLNKNVFTSAEELERAQRLEERERIIREIWMNGQPEVPGTRSLNRYY.

Residues 40-60 traverse the membrane as a helical segment; that stretch reads ALYFVSGVCIGLFLTLAALVM. The tract at residues 79–100 is disordered; that stretch reads DRECSDSSDSEDGSEDTASDLS. Over residues 84–96 the composition is skewed to acidic residues; the sequence is DSSDSEDGSEDTA. T110 carries the post-translational modification Phosphothreonine. Position 118 is a phosphoserine (S118).

The protein belongs to the EVA1 family.

It is found in the endoplasmic reticulum membrane. The protein resides in the lysosome membrane. Functionally, acts as a regulator of programmed cell death, mediating both autophagy and apoptosis. This is Protein eva-1 homolog A (Eva1a) from Mus musculus (Mouse).